A 147-amino-acid chain; its full sequence is Large ribosomal subunit protein uL15 (147 aa).

The tract at residues 1-59 is disordered; that stretch reads MKLYELKPAPGSKKNRKRVGRGESSGHGKTSTRGHKGQWARSGGGVRPGFEGGQMPLTR. Over residues 42-52 the composition is skewed to gly residues; it reads SGGGVRPGFEG.

This sequence belongs to the universal ribosomal protein uL15 family. As to quaternary structure, part of the 50S ribosomal subunit.

Functionally, binds to the 23S rRNA. This Caldicellulosiruptor bescii (strain ATCC BAA-1888 / DSM 6725 / KCTC 15123 / Z-1320) (Anaerocellum thermophilum) protein is Large ribosomal subunit protein uL15.